The primary structure comprises 496 residues: Cytochrome P450 71D179 (496 aa).

The chain crosses the membrane as a helical; Signal-anchor for type II membrane protein span at residues 1–21 (MDISISWVVIIVSVLSYLILM). Cys-435 lines the heme pocket.

It belongs to the cytochrome P450 family. Heme is required as a cofactor.

It is found in the membrane. It participates in secondary metabolite biosynthesis; terpenoid biosynthesis. Its function is as follows. Involved in the biosynthesis of phenolic monoterpenes natural products thymol and carvacrol which have a broad range of biological activities acting as antimicrobial compounds, insecticides, antioxidants and pharmaceutical agents. Catalyzes probably the C3-hydroxylation of gamma-terpinene to produce thymol. This chain is Cytochrome P450 71D179, found in Thymus vulgaris (Thyme).